A 542-amino-acid polypeptide reads, in one-letter code: TOM1-like protein 7 (542 aa).

In terms of domain architecture, VHS spans alanine 29–proline 158. At serine 161 the chain carries Phosphoserine. The region spanning glutamate 201–serine 289 is the GAT domain. The segment at arginine 303 to aspartate 340 is disordered. Positions alanine 314–glutamate 332 are enriched in low complexity. Serine 521 carries the post-translational modification Phosphoserine. Positions phenylalanine 522–proline 542 are disordered. The span at alanine 524–proline 542 shows a compositional bias: low complexity.

It belongs to the TOM1 family. In terms of tissue distribution, preferentially expressed in flowers.

Its subcellular location is the membrane. In terms of biological role, might contribute to the loading of the ESCRT machinery. The polypeptide is TOM1-like protein 7 (Arabidopsis thaliana (Mouse-ear cress)).